The primary structure comprises 2474 residues: Serine/threonine-protein kinase TOR2 (2474 aa).

Positions methionine 1–isoleucine 62 are disordered. Threonine 10 is modified (phosphothreonine). A compositionally biased stretch (basic residues) spans histidine 25–histidine 36. Residues serine 43 to asparagine 56 show a composition bias toward polar residues. 11 HEAT repeats span residues tyrosine 588–isoleucine 626, histidine 636–alanine 674, proline 676–alanine 710, proline 756–lysine 793, arginine 797–tyrosine 835, leucine 841–tyrosine 879, tyrosine 917–leucine 955, arginine 1039–asparagine 1076, aspartate 1079–leucine 1116, glutamate 1118–threonine 1155, and serine 1292–proline 1331. Residues threonine 1338 to serine 1922 form the FAT domain. Positions phenylalanine 2097–arginine 2421 constitute a PI3K/PI4K catalytic domain. Positions valine 2103–arginine 2109 are G-loop. Residues glycine 2276–asparagine 2284 form a catalytic loop region. The tract at residues histidine 2296–threonine 2321 is activation loop. Positions asparagine 2442–tryptophan 2474 constitute an FATC domain.

The protein belongs to the PI3/PI4-kinase family. In terms of assembly, the target of rapamycin complex 1 (TORC1) is composed of at least KOG1, LST8, TCO89 and either TOR1 (TORC1-A) or TOR2 (TORC1-B). TORC1 binds to and is inhibited by FKBP-rapamycin. Interacts with PIB2; following activation of PIB2 by glutamine. The target of rapamycin complex 2 (TORC2) is composed of at least AVO1, AVO2, BIT61, LST8, TOR2 and TSC11. TORC2 forms a homodimer. Contrary to TORC1, TORC2 does not bind to and is not sensitive to FKBP-rapamycin. Interacts with SLM1 and SLM2.

Its subcellular location is the cell membrane. The protein resides in the vacuole membrane. It carries out the reaction L-seryl-[protein] + ATP = O-phospho-L-seryl-[protein] + ADP + H(+). It catalyses the reaction L-threonyl-[protein] + ATP = O-phospho-L-threonyl-[protein] + ADP + H(+). The enzyme catalyses a 1,2-diacyl-sn-glycero-3-phospho-(1D-myo-inositol) + ATP = a 1,2-diacyl-sn-glycero-3-phospho-(1D-myo-inositol 4-phosphate) + ADP + H(+). Functionally, phosphatidylinositol 3-kinase homolog, component of both TORC1 and TORC2. TORC1 regulates multiple cellular processes to control cell growth in response to environmental signals. Nutrient limitation and environmental stress signals cause inactivation of TORC1. Active TORC1 positively controls ribosome biogenesis via control of rRNA, ribosomal protein and tRNA gene expression, and rRNA processing. TORC1 positively controls protein biosynthesis by regulation of mRNA stability, translation initiation factor activity, and high-affinity amino acid permeases that serve to provide amino acids for use by the translation machinery. TORC1 also promotes growth by sequestering a number of nutrient and general stress-responsive transcription factors in the cytoplasm. TORC1 negatively controls macroautophagy, a process to recycle surplus cytoplasmic mass under nutrient starvation conditions. TORC1 controls many of these processes via TIP41-TAP42-mediated inhibition of the type 2A-related phosphatases PP2A and SIT4. In nutrient-rich conditions, responsible for the phosphorylation of AGC S6 kinase (S6K) YPK3, activating YPK3 kinase activity and promoting phosphorylation of ribosomal protein S6. Phosphorylates kinase SCH9 at 6 amino acids in the C-terminus, activating SCH9 kinase activity to properly regulate ribosome biogenesis, translation initiation, and entry into stationary phase. TORC2 regulates cell cycle-dependent polarization of the actin-cytoskeleton, cell wall integrity, and receptor endocytosis. TORC2 controls polarity of the actin cytoskeleton, which is required for orienting the secretory pathway toward discrete growth sites, via the RHO1/PKC1/MAPK cell integrity pathway by activating the RHO1 guanine nucleotide exchange factor ROM2. TORC2 phosphorylates the AGC kinase YPK2, an upstream effector of the cell integrity pathway. TORC2 negatively regulates calcineurin-dependent stress signaling via phosphorylation of its effector SLM1-SLM2. The protein is Serine/threonine-protein kinase TOR2 (TOR2) of Saccharomyces cerevisiae (strain ATCC 204508 / S288c) (Baker's yeast).